A 63-amino-acid polypeptide reads, in one-letter code: Small ribosomal subunit protein eS27 (63 aa).

Residues Cys18, Cys21, Cys37, and Cys40 each contribute to the Zn(2+) site. Residues 18–40 form a C4-type zinc finger; it reads CLDCGNQQVVFDRAASYVQCIIC.

It belongs to the eukaryotic ribosomal protein eS27 family. Part of the 30S ribosomal subunit. Requires Zn(2+) as cofactor.

The sequence is that of Small ribosomal subunit protein eS27 from Methanothermobacter thermautotrophicus (strain ATCC 29096 / DSM 1053 / JCM 10044 / NBRC 100330 / Delta H) (Methanobacterium thermoautotrophicum).